Reading from the N-terminus, the 126-residue chain is Prefoldin subunit beta (126 aa).

It belongs to the prefoldin subunit beta family. Heterohexamer of two alpha and four beta subunits.

The protein resides in the cytoplasm. In terms of biological role, molecular chaperone capable of stabilizing a range of proteins. Seems to fulfill an ATP-independent, HSP70-like function in archaeal de novo protein folding. The protein is Prefoldin subunit beta of Methanocella arvoryzae (strain DSM 22066 / NBRC 105507 / MRE50).